A 1647-amino-acid chain; its full sequence is MAIGNIAARYLSSLEETDTTATTTTTTTSNVLQPSNRLNSPTKFNRKSLDNNSQDLDALARALNITPSKPETPTSISKGSATSLLRTKFESPSATVSSFKSTSSSNGVSPTKKNHFVEITSDETPSWANKNYKDILNKSPTKFNTQSNVHTPLKQLNQPIGTPSSSSLSPAKNASKSSPGYEYLCRIEAIKQWLESVLQEQITQSASQLISYIRNGIHLAKLANVVLPTSKPVFLNDSKLQFKHTENINRFFQLLDFFNMPDLFRFELTDLYDAKNVPKVWFCLHALSYILHKQDPSYPAMNNLVGKVDFSADDIRTANRALVNSPLPNFSSADTGEGKSDTSNNNSSTTSATAAFMDKVTSPVKKTPSPLKRPQQLQKKQLELVEDNKPELTQDSSGLSKISRDDPFTDRVDLAPPSTSNAKLELHTPPSKSLEFKIKSPIIDLSHRDSDYYTPELESHLPNIIKFQSLARGAVFRYLMFVDRILLKSYQDEFTNLFAIIRGNKARRKTVHKHRDELRLYSFEIIELQSIIRKNFVINKKPNFTSITNDVETVELQSLIRGKLTRDWKKYVTNGLEKFTPQIIDFQSLVRMKSIYSKSNKVISYKDEILPSLIELQSIARSQLYHRFSRSNAIDETEIIKIQSIIRRNAVIEDLYTKLSKVRSNKRRLIELQSIARGGVARTKLCNSVLVTLIYEDGILNQLFAKIRGDNYRKKFNSQKSELLKYEKSSIIPVQTLFRGVLSRYTKEVTLSDIFDQIDSVITLQSVARGKLMRGSIYEFSDYYQKHIKQVVKAQAILQRVFAQNAYKQLITSKNPPLKVIRRFAPLLSNNDRDFQDEMTLSDLKDLIIEKCKANEEYENQIEQLDMKLGLLDKNKISIEEFLKPTKGKTFKPIVENVKNLERLNKSLKKKIELWQTLFYFIQTNPIYLTKLFNSIPYTKNQTKSGQDLFQSVIQLFPVRDSSITYHSREEYFLVKLMIQLMQNDTANSNNLGDITKLHLTNWIDFFTNFNNHTFQRQHLKALLGKFVIRIVDNEQVDFESDPIRIYNQIIDHEMKVYGRSEKSRDISPQAAIQLPEVSNKFVGNLMSLRETCSDLLSMLQKNASGNKALLQIPDHVKLICRQGYLCAQRKFPDKSDQQHLAVAGVIFVKHYLGSILQVPENYGILTGNNDTQKAKSKDNLRYLYRVMLQLFSMKPFNDNFLKPLNEYIMASTDTVKSIISQAIINVGEIETVYELHDYDDLVTHQRPKLTISVNSLIQLEKSILQNVDIITTGNDDQLYKTCVEVEKLLISPQDMLTLTDLSSVTLNLNPTTQEESIVDSKTKTLFTQAKRCLLYIIRVQEEDDSDDLLELLISGIKPSHEQRFKEIVQYEKAEQDISLNNSKSVTANTVNKKKSTRPYSGTSLGDLSNLTYHELKKMCLEIILKLESMGELTRKNSFQTLLNQIAMDIKTKDSQRQCRWQQLQVSQKTIKKLSEKENYLKTQLHNYKKHVESVLLELQSKSKSNDKNWKRRLFNIMVIPVFSKQYFYHRELRKHNRLPKFGSYKYSAKKLIDQKVLIDFSTANNVATASKLDFMFSCHQVGKFTIEVASGTVNIPGATNTITLDELLALQYENKTKFELFDGMATFDSNNFMGLIFRKFYDLKKE.

The tract at residues 18 to 51 (DTTATTTTTTTSNVLQPSNRLNSPTKFNRKSLDN) is disordered. Positions 19–28 (TTATTTTTTT) are enriched in low complexity. Positions 29–43 (SNVLQPSNRLNSPTK) are enriched in polar residues. Ser-48 carries the post-translational modification Phosphoserine. Phosphothreonine occurs at positions 66, 72, and 82. Phosphoserine occurs at positions 83, 91, and 139. A compositionally biased stretch (polar residues) spans 143 to 162 (FNTQSNVHTPLKQLNQPIGT). The interval 143 to 175 (FNTQSNVHTPLKQLNQPIGTPSSSSLSPAKNAS) is disordered. Low complexity predominate over residues 163 to 175 (PSSSSLSPAKNAS). Phosphoserine occurs at positions 165, 167, and 169. The 108-residue stretch at 184 to 291 (LCRIEAIKQW…FCLHALSYIL (108 aa)) folds into the Calponin-homology (CH) domain. Residues 326 to 427 (PLPNFSSADT…STSNAKLELH (102 aa)) are disordered. A compositionally biased stretch (low complexity) spans 342–355 (TSNNNSSTTSATAA). Residue Thr-367 is modified to Phosphothreonine. Residues 368 to 379 (PSPLKRPQQLQK) are compositionally biased toward low complexity. Position 369 is a phosphoserine (Ser-369). 2 stretches are compositionally biased toward basic and acidic residues: residues 380–392 (KQLE…KPEL) and 402–413 (ISRDDPFTDRVD). 2 positions are modified to phosphoserine: Ser-433 and Ser-440. IQ domains follow at residues 467 to 478 (FQSLARGAVFRY), 528 to 539 (LQSIIRKNFVIN), 556 to 567 (LQSLIRGKLTRD), 586 to 597 (FQSLVRMKSIYS), 616 to 627 (LQSIARSQLYHR), 642 to 653 (IQSIIRRNAVIE), 672 to 683 (LQSIARGGVART), 734 to 745 (VQTLFRGVLSRY), and 764 to 775 (LQSVARGKLMRG). The stretch at 841-919 (LSDLKDLIIE…KKIELWQTLF (79 aa)) forms a coiled coil. Residues 958 to 1223 (PVRDSSITYH…DTVKSIISQA (266 aa)) form the Ras-GAP domain. Phosphoserine occurs at positions 1064, 1068, 1088, 1383, and 1385.

In terms of assembly, interacts with myosin MYO1 and its light chain MLC1. Interacts with BNI1. Interacts with BNR1. Interacts with CLB2. Interacts with CLB4. Interacts with CDC28. Hyperphosphorylated. Phosphorylation is cell cycle-dependent and peaks at the time of cytokinesis. Contains 21 consensus sites for cyclin-dependent kinases (CDKs). At least some of them are phosphorylated by the CLB2-CDC28 kinase complex. Mutation of 15 of the phosphorylation sites to Ala caused both premature assembly and delayed disassembly of the actomyosin ring, blocked interaction with the actin-nucleating proteins BNI1 and BNR1, and resulted in defects in cytokinesis.

Its subcellular location is the bud neck. Functionally, required for the assembly and the contraction of the actomyosin ring at the bud neck during cytokinesis. The protein is Ras GTPase-activating-like protein IQG1 (IQG1) of Candida albicans (strain SC5314 / ATCC MYA-2876) (Yeast).